An 83-amino-acid polypeptide reads, in one-letter code: GGGARSGDDVVAKYCNACHGTGLLNAPKVGDSAAWKTRADAKGGLDGLLAQSLSGLNAMPPKGTCADCSDDELKAAIGKMSGL.

Heme c contacts are provided by C15, C18, H19, and M59. C65 and C68 are joined by a disulfide.

Belongs to the cytochrome c family. As to quaternary structure, homodimer. In terms of processing, binds 1 heme c group covalently per subunit.

It is unreactive with cytochrome c reductase or oxidase. In Azotobacter vinelandii, this protein is Cytochrome c5.